Here is a 281-residue protein sequence, read N- to C-terminus: 2,3,4,5-tetrahydropyridine-2,6-dicarboxylate N-succinyltransferase (281 aa).

Positions 108 and 145 each coordinate substrate.

Belongs to the transferase hexapeptide repeat family. As to quaternary structure, homotrimer.

Its subcellular location is the cytoplasm. It catalyses the reaction (S)-2,3,4,5-tetrahydrodipicolinate + succinyl-CoA + H2O = (S)-2-succinylamino-6-oxoheptanedioate + CoA. It participates in amino-acid biosynthesis; L-lysine biosynthesis via DAP pathway; LL-2,6-diaminopimelate from (S)-tetrahydrodipicolinate (succinylase route): step 1/3. The sequence is that of 2,3,4,5-tetrahydropyridine-2,6-dicarboxylate N-succinyltransferase from Nitrobacter hamburgensis (strain DSM 10229 / NCIMB 13809 / X14).